A 469-amino-acid chain; its full sequence is Trehalose-6-phosphate synthase (469 aa).

Arginine 10 serves as a coordination point for D-glucose 6-phosphate. Residue 22 to 23 (GG) participates in UDP-alpha-D-glucose binding. D-glucose 6-phosphate is bound by residues tyrosine 77 and aspartate 131. Arginine 262 and lysine 267 together coordinate UDP-alpha-D-glucose. Residue arginine 300 coordinates D-glucose 6-phosphate. Residue 365–369 (LVAKE) coordinates UDP-alpha-D-glucose.

This sequence belongs to the glycosyltransferase 20 family. As to quaternary structure, homotetramer.

The catalysed reaction is D-glucose 6-phosphate + UDP-alpha-D-glucose = alpha,alpha-trehalose 6-phosphate + UDP + H(+). The protein operates within glycan biosynthesis; trehalose biosynthesis. Functionally, probably involved in the osmoprotection via the biosynthesis of trehalose. Catalyzes the transfer of glucose from UDP-alpha-D-glucose (UDP-Glc) to D-glucose 6-phosphate (Glc-6-P) to form trehalose-6-phosphate. Acts with retention of the anomeric configuration of the UDP-sugar donor. The polypeptide is Trehalose-6-phosphate synthase (Sodalis glossinidius (strain morsitans)).